The chain runs to 601 residues: Elongation factor 4 (601 aa).

A tr-type G domain is found at 5–187 (ENIRNFCIVA…AIITTFPPPK (183 aa)). Residues 17 to 22 (DHGKST) and 134 to 137 (NKID) contribute to the GTP site.

This sequence belongs to the TRAFAC class translation factor GTPase superfamily. Classic translation factor GTPase family. LepA subfamily.

The protein resides in the cell inner membrane. The catalysed reaction is GTP + H2O = GDP + phosphate + H(+). Functionally, required for accurate and efficient protein synthesis under certain stress conditions. May act as a fidelity factor of the translation reaction, by catalyzing a one-codon backward translocation of tRNAs on improperly translocated ribosomes. Back-translocation proceeds from a post-translocation (POST) complex to a pre-translocation (PRE) complex, thus giving elongation factor G a second chance to translocate the tRNAs correctly. Binds to ribosomes in a GTP-dependent manner. The sequence is that of Elongation factor 4 from Treponema denticola (strain ATCC 35405 / DSM 14222 / CIP 103919 / JCM 8153 / KCTC 15104).